A 232-amino-acid polypeptide reads, in one-letter code: Probable GTP-binding protein EngB (232 aa).

Residues 13–188 (IGLEVAFAGR…AGVMGNWYEY (176 aa)) enclose the EngB-type G domain. GTP-binding positions include 21 to 28 (GRSNAGKS), 48 to 52 (GRTQM), 67 to 70 (DLPG), 134 to 137 (TKAD), and 167 to 169 (FSA). Residues S28 and T50 each contribute to the Mg(2+) site.

Belongs to the TRAFAC class TrmE-Era-EngA-EngB-Septin-like GTPase superfamily. EngB GTPase family. Mg(2+) is required as a cofactor.

Necessary for normal cell division and for the maintenance of normal septation. This is Probable GTP-binding protein EngB from Psychrobacter arcticus (strain DSM 17307 / VKM B-2377 / 273-4).